Here is a 116-residue protein sequence, read N- to C-terminus: Large ribosomal subunit protein bL17 (116 aa).

Belongs to the bacterial ribosomal protein bL17 family. Part of the 50S ribosomal subunit. Contacts protein L32.

This is Large ribosomal subunit protein bL17 from Wolinella succinogenes (strain ATCC 29543 / DSM 1740 / CCUG 13145 / JCM 31913 / LMG 7466 / NCTC 11488 / FDC 602W) (Vibrio succinogenes).